A 182-amino-acid chain; its full sequence is Putative minor fimbrial subunit PmfF (182 aa).

Residues 1–22 (MKNSIIKSAITCLLLLSPSTFA) form the signal peptide.

The protein belongs to the fimbrial protein family.

The protein localises to the fimbrium. The polypeptide is Putative minor fimbrial subunit PmfF (pmfF) (Proteus mirabilis (strain HI4320)).